Reading from the N-terminus, the 282-residue chain is Undecaprenyl-diphosphatase (282 aa).

The next 7 membrane-spanning stretches (helical) occupy residues 6-26 (LYFV…FIPV), 45-65 (SGKV…MWIF), 85-105 (LFTR…AIFI), 112-132 (FYHP…MLWV), 200-220 (ATEF…VYDM), 230-250 (HDLG…LLVV), and 262-282 (YRGF…WLAF).

This sequence belongs to the UppP family.

It is found in the cell inner membrane. The enzyme catalyses di-trans,octa-cis-undecaprenyl diphosphate + H2O = di-trans,octa-cis-undecaprenyl phosphate + phosphate + H(+). Functionally, catalyzes the dephosphorylation of undecaprenyl diphosphate (UPP). Confers resistance to bacitracin. The chain is Undecaprenyl-diphosphatase from Bordetella avium (strain 197N).